Reading from the N-terminus, the 215-residue chain is Thiopurine S-methyltransferase (215 aa).

Trp10, Leu45, Glu66, and Arg123 together coordinate S-adenosyl-L-methionine.

The protein belongs to the class I-like SAM-binding methyltransferase superfamily. TPMT family.

It localises to the cytoplasm. It carries out the reaction S-adenosyl-L-methionine + a thiopurine = S-adenosyl-L-homocysteine + a thiopurine S-methylether.. This chain is Thiopurine S-methyltransferase, found in Pseudomonas putida (strain W619).